Consider the following 107-residue polypeptide: Nucleoid-associated protein Rru_A3472 (107 aa).

Belongs to the YbaB/EbfC family. Homodimer.

The protein resides in the cytoplasm. The protein localises to the nucleoid. Its function is as follows. Binds to DNA and alters its conformation. May be involved in regulation of gene expression, nucleoid organization and DNA protection. The protein is Nucleoid-associated protein Rru_A3472 of Rhodospirillum rubrum (strain ATCC 11170 / ATH 1.1.1 / DSM 467 / LMG 4362 / NCIMB 8255 / S1).